Here is a 204-residue protein sequence, read N- to C-terminus: Protein XpaC (204 aa).

Its function is as follows. In double copy it causes aberrant cell morphology, filamentation and inhibits sporulation. Hydrolyzes 5-bromo-4-chloroindolyl phosphate. This is Protein XpaC (xpaC) from Bacillus subtilis (strain 168).